The chain runs to 152 residues: Large ribosomal subunit protein bL9 (152 aa).

This sequence belongs to the bacterial ribosomal protein bL9 family.

Binds to the 23S rRNA. This is Large ribosomal subunit protein bL9 from Prochlorococcus marinus (strain NATL2A).